Consider the following 488-residue polypeptide: Ribulose bisphosphate carboxylase large chain (488 aa).

Positions 127 and 177 each coordinate substrate. Lysine 179 (proton acceptor) is an active-site residue. Position 181 (lysine 181) interacts with substrate. Mg(2+) contacts are provided by lysine 205, aspartate 207, and glutamate 208. Lysine 205 is subject to N6-carboxylysine. Histidine 297 (proton acceptor) is an active-site residue. Positions 298, 330, and 382 each coordinate substrate.

Belongs to the RuBisCO large chain family. Type I subfamily. As to quaternary structure, heterohexadecamer of 8 large chains and 8 small chains. The cofactor is Mg(2+).

It localises to the plastid. The protein resides in the chloroplast. It catalyses the reaction 2 (2R)-3-phosphoglycerate + 2 H(+) = D-ribulose 1,5-bisphosphate + CO2 + H2O. The catalysed reaction is D-ribulose 1,5-bisphosphate + O2 = 2-phosphoglycolate + (2R)-3-phosphoglycerate + 2 H(+). Functionally, ruBisCO catalyzes two reactions: the carboxylation of D-ribulose 1,5-bisphosphate, the primary event in carbon dioxide fixation, as well as the oxidative fragmentation of the pentose substrate in the photorespiration process. Both reactions occur simultaneously and in competition at the same active site. The sequence is that of Ribulose bisphosphate carboxylase large chain from Olisthodiscus luteus (Marine phytoflagellate).